A 495-amino-acid chain; its full sequence is Nitrogen fixation regulatory protein (495 aa).

A PAS 1 domain is found at 23–93; the sequence is HPGLFFTMVE…QEMWQTLLQR (71 aa). The region spanning 94 to 148 is the PAC domain; sequence QPWRGQLINQARDGGLYLVDIDITPVLNPQGELEHYLAMQRDISVSYTLEQRLRN. The region spanning 151–174 is the PAS 2; truncated domain; the sequence is TLMEAVLNNIPAAVVVVDEQDRVV.

FAD is required as a cofactor.

Its function is as follows. Required for the inhibition of NifA activity in response to oxygen and low level of fixed nitrogen. The polypeptide is Nitrogen fixation regulatory protein (nifL) (Klebsiella pneumoniae).